The chain runs to 293 residues: Glutamyl-Q tRNA(Asp) synthetase (293 aa).

L-glutamate-binding positions include 9-13 (RFAPS) and glutamate 45. A 'HIGH' region motif is present at residues 12-22 (PSPSGELHFGS). Zn(2+)-binding residues include cysteine 101, cysteine 103, tyrosine 115, and cysteine 119. L-glutamate contacts are provided by tyrosine 172 and arginine 190. The 'KMSKS' region motif lies at 228 to 232 (KLSKQ). An ATP-binding site is contributed by lysine 231.

This sequence belongs to the class-I aminoacyl-tRNA synthetase family. GluQ subfamily. Requires Zn(2+) as cofactor.

Catalyzes the tRNA-independent activation of glutamate in presence of ATP and the subsequent transfer of glutamate onto a tRNA(Asp). Glutamate is transferred on the 2-amino-5-(4,5-dihydroxy-2-cyclopenten-1-yl) moiety of the queuosine in the wobble position of the QUC anticodon. The polypeptide is Glutamyl-Q tRNA(Asp) synthetase (Klebsiella pneumoniae (strain 342)).